Reading from the N-terminus, the 301-residue chain is 3-dehydroquinate dehydratase (301 aa).

The tract at residues 1–221 (MLQYGVLICG…YYAALLALGI (221 aa)) is 3-dehydroquinate dehydratase. Residues 32 to 34 (ELR) and arginine 63 contribute to the 3-dehydroquinate site. The active-site Proton donor/acceptor is histidine 119. Lysine 145 acts as the Schiff-base intermediate with substrate in catalysis. Positions 183, 202, and 206 each coordinate 3-dehydroquinate. A Chorismate mutase domain is found at 222 to 301 (TPSGGGLPAL…QMCKAVQLVA (80 aa)).

The protein belongs to the type-I 3-dehydroquinase family. In terms of assembly, homodimer.

It carries out the reaction 3-dehydroquinate = 3-dehydroshikimate + H2O. Its pathway is metabolic intermediate biosynthesis; chorismate biosynthesis; chorismate from D-erythrose 4-phosphate and phosphoenolpyruvate: step 3/7. Involved in the third step of the chorismate pathway, which leads to the biosynthesis of aromatic amino acids. Catalyzes the cis-dehydration of 3-dehydroquinate (DHQ) and introduces the first double bond of the aromatic ring to yield 3-dehydroshikimate. The protein is 3-dehydroquinate dehydratase of Pyrobaculum aerophilum (strain ATCC 51768 / DSM 7523 / JCM 9630 / CIP 104966 / NBRC 100827 / IM2).